Consider the following 326-residue polypeptide: GTP 3',8-cyclase (326 aa).

One can recognise a Radical SAM core domain in the interval 7 to 240 (AFARKFYYLR…AQVFHHSDYQ (234 aa)). Arginine 16 provides a ligand contact to GTP. Residues cysteine 23 and cysteine 27 each contribute to the [4Fe-4S] cluster site. Tyrosine 29 lines the S-adenosyl-L-methionine pocket. [4Fe-4S] cluster is bound at residue cysteine 30. Arginine 65 is a binding site for GTP. Glycine 69 contacts S-adenosyl-L-methionine. Threonine 96 lines the GTP pocket. S-adenosyl-L-methionine is bound at residue serine 120. Lysine 157 provides a ligand contact to GTP. Methionine 191 is a binding site for S-adenosyl-L-methionine. [4Fe-4S] cluster contacts are provided by cysteine 254 and cysteine 257. Position 259-261 (259-261 (RLR)) interacts with GTP. Cysteine 271 is a [4Fe-4S] cluster binding site.

Belongs to the radical SAM superfamily. MoaA family. As to quaternary structure, monomer and homodimer. Requires [4Fe-4S] cluster as cofactor.

It carries out the reaction GTP + AH2 + S-adenosyl-L-methionine = (8S)-3',8-cyclo-7,8-dihydroguanosine 5'-triphosphate + 5'-deoxyadenosine + L-methionine + A + H(+). It participates in cofactor biosynthesis; molybdopterin biosynthesis. Catalyzes the cyclization of GTP to (8S)-3',8-cyclo-7,8-dihydroguanosine 5'-triphosphate. This chain is GTP 3',8-cyclase, found in Yersinia pestis.